The primary structure comprises 231 residues: MTMTTAAVFGCTGAVGSQILATLLAIDTFPSVKTISRRLPNVQSPKLEAIEEGDSSKWGGMISSFSPKPSVVFNAVGTTRAAAGGLQNQWKIDHDLCIENARAAKEAGVKTYVFISGAGIRGFVARYLPFSKMKIGVEDAIKDLDFEHAIILRPGMIIGRENPKSALLENIVGGLNKLGQGIQDSLGQDQTVIARAAVAAARMADEGKAPSKYWVVEMADIVRLGRDEWKE.

A mitochondrion-targeting transit peptide spans 1–46; sequence MTMTTAAVFGCTGAVGSQILATLLAIDTFPSVKTISRRLPNVQSPK.

It belongs to the FMP52 family.

It localises to the mitochondrion outer membrane. In Neosartorya fischeri (strain ATCC 1020 / DSM 3700 / CBS 544.65 / FGSC A1164 / JCM 1740 / NRRL 181 / WB 181) (Aspergillus fischerianus), this protein is Protein fmp52-2, mitochondrial (fmp522).